The sequence spans 888 residues: Lon protease homolog 2, peroxisomal (888 aa).

The region spanning 11–255 (LAILPFRNKV…KATELVDRHL (245 aa)) is the Lon N-terminal domain. An ATP-binding site is contributed by 408–415 (GPPGVGKT). A Lon proteolytic domain is found at 692–877 (VASAGVSVGL…EDVLENAFEG (186 aa)). Catalysis depends on residues Ser-783 and Lys-826. A Microbody targeting signal motif is present at residues 886-888 (SKL).

It belongs to the peptidase S16 family.

The protein resides in the peroxisome matrix. It carries out the reaction Hydrolysis of proteins in presence of ATP.. Functionally, ATP-dependent serine protease that mediates the selective degradation of misfolded and unassembled polypeptides in the peroxisomal matrix. Necessary for type 2 peroxisome targeting signal (PTS2)-containing protein processing and facilitates peroxisome matrix protein import. This is Lon protease homolog 2, peroxisomal (LON2) from Arabidopsis thaliana (Mouse-ear cress).